Here is a 539-residue protein sequence, read N- to C-terminus: CTP synthase (539 aa).

An amidoligase domain region spans residues 1–267 (MTKYIFVTGG…DQKVCDFLHL (267 aa)). Ser-13 contributes to the CTP binding site. Ser-13 serves as a coordination point for UTP. 14–19 (SLGKGI) contacts ATP. Tyr-54 lines the L-glutamine pocket. Asp-71 is an ATP binding site. Residues Asp-71 and Glu-141 each contribute to the Mg(2+) site. CTP is bound by residues 148–150 (DIE), 188–193 (KTKPTQ), and Lys-224. Residues 188–193 (KTKPTQ) and Lys-224 contribute to the UTP site. Positions 294–537 (KITLVGKYVE…IGAASGLPAQ (244 aa)) constitute a Glutamine amidotransferase type-1 domain. Gly-356 is a binding site for L-glutamine. Cys-383 (nucleophile; for glutamine hydrolysis) is an active-site residue. Residues 384-387 (LGMQ), Glu-407, and Arg-465 each bind L-glutamine. Residues His-510 and Glu-512 contribute to the active site.

This sequence belongs to the CTP synthase family. In terms of assembly, homotetramer.

The catalysed reaction is UTP + L-glutamine + ATP + H2O = CTP + L-glutamate + ADP + phosphate + 2 H(+). It carries out the reaction L-glutamine + H2O = L-glutamate + NH4(+). It catalyses the reaction UTP + NH4(+) + ATP = CTP + ADP + phosphate + 2 H(+). It participates in pyrimidine metabolism; CTP biosynthesis via de novo pathway; CTP from UDP: step 2/2. Its activity is regulated as follows. Allosterically activated by GTP, when glutamine is the substrate; GTP has no effect on the reaction when ammonia is the substrate. The allosteric effector GTP functions by stabilizing the protein conformation that binds the tetrahedral intermediate(s) formed during glutamine hydrolysis. Inhibited by the product CTP, via allosteric rather than competitive inhibition. Functionally, catalyzes the ATP-dependent amination of UTP to CTP with either L-glutamine or ammonia as the source of nitrogen. Regulates intracellular CTP levels through interactions with the four ribonucleotide triphosphates. The polypeptide is CTP synthase (Lactobacillus acidophilus (strain ATCC 700396 / NCK56 / N2 / NCFM)).